A 480-amino-acid chain; its full sequence is Heparin cofactor 2 (480 aa).

A signal peptide spans 1-19 (MQHRPHLLLISLTIMSVCG). Asparagine 32 carries N-linked (GlcNAc...) asparagine glycosylation. 2 tandem repeats follow at residues 56 to 66 (GEEDDDYLDLE) and 70 to 80 (SEDDDYIDIID). The tract at residues 56-80 (GEEDDDYLDLEKLLSEDDDYIDIID) is 2 X 11 AA approximate repeats, Asp/Glu-rich (acidic) (hirudin-like). Tyrosine 62 and tyrosine 75 each carry sulfotyrosine. The N-linked (GlcNAc...) asparagine glycan is linked to asparagine 169. A glycosaminoglycan-binding site region spans residues 173 to 193 (KYEILTIHNLFRKLTHRLFRR). N-linked (GlcNAc...) asparagine glycosylation is found at asparagine 368 and asparagine 404.

It belongs to the serpin family. Post-translationally, N-glycosylated; different glycan composition appears to lead to two forms of this protein (56 and 60 kDa).

In terms of biological role, thrombin inhibitor activated by the glycosaminoglycans, heparin or dermatan sulfate. In the presence of the latter, HC-II becomes the predominant thrombin inhibitor in place of antithrombin III (AT). The chain is Heparin cofactor 2 (SERPIND1) from Oryctolagus cuniculus (Rabbit).